The chain runs to 121 residues: Large ribosomal subunit protein bL20 (121 aa).

The protein belongs to the bacterial ribosomal protein bL20 family.

Its function is as follows. Binds directly to 23S ribosomal RNA and is necessary for the in vitro assembly process of the 50S ribosomal subunit. It is not involved in the protein synthesizing functions of that subunit. The protein is Large ribosomal subunit protein bL20 of Persephonella marina (strain DSM 14350 / EX-H1).